We begin with the raw amino-acid sequence, 1289 residues long: MRKYTVIASILLSFLSVLSGGHHESKAFPVVQQELFQTPHYIPLLENPPQIDVKAEMRSNLMIEAQVRDNSYQAFSAFLFYKQSNELGYKMVPMDPTPGAVRKFLAQIPKRLIWNSELEYYIVMSNGKQRVESETKKLKLEGYQADLAHIPELLITELAVDTKNIGRADGYEFIEIFNTTDRTIDFKDYHIRYRYPKEGPDSDLIWRPDERILIPSGETFVVWLKPAGHPELTSADFNRYYQTQLKEGKNLAVIDETEGMANTRPRAVVISTNTGKDISVAHYRKHALRRLSSVLYKYPLNGTAELLNISIGEKNPSPGTVLQAQVPDQKRKIKLDKEKPVIEDLTDRKPVRPAESIELRADIRDRSLVKTVAFYYRTDENKPFKRILAEKDRNDNLFHYIVYSPELIGKDQLEYYVAAGDGINEARTPVKMIDIKQTSKAHGLRMNIENRDTLSGTQFLKATTEGRADSIKLWIDGKKQVTEPAMEKEVYFAFDTRKTNLYFKNAVTMEGKVLKVFDDTTNKYRTYSVPLPETLLRKGKQLQRITIRSGSKVSPFDTAENRDDFLVKNARLVLSDGTVIRDQRVSPEKELFIGDNQRSNKSWQFQFNLPDGLFTSQLLEWDTSKLSEGAHHIQASDGKENVSLVVRVDNSGPHIEPNITEGQTYKGNLILQADMYDKWSRIEEAEASLDGESITLPYHTSSSDLLPGKHSLKVTATDLAGNKTVIERIFKTEREHPDQPEVIDSEADTHKAKLSVRVKDPTNDAMDVGFYRGFQYTARNHVKIFKHASLTEPPKSFVPERETPFTNKELERVSAADGKTVSTENKELFPYHRFEVTVDPSIDENDLAESVWKGSSLPGRKVTMYAWNYRTNEWQPVDSFVAKDDKPFTLKASVIAADFVRESKMNVIVQDEIPPAKDMYTFVWMSDTQYYAESYPHIFDKQTEWIKDNQKQLNIKYVFHTGDIVDDSADIRQWKNADRSMSVLDKSGIPYGVLAGNHDVGHKDGSYRAFGKYFGSDRFDKKFHYGGSYKNNRGHYDLISSNGNDYIMLYMGWGITDEDIAWMNQVLKKHPDRMAILAFHEYLLVSGNRSPIGEKIFKEIVKPNPNVVMVLSGHYHSAMRKTDELDDDGDGKPDRLVHQMLADYQGGPEGGQGYLRLLQFDQANDMVHVSTYSPYVKDKNYYDTDTYGNKDEFSLSLDLKPRIKKVETDYFECNVYTNEELGKREQVKSGDTAEFRWDHLEPQSVYYWYIIVEDSFNGKTKSPIWKFKTKKETYRPAPDQFDFRHVSNP.

Residues 1-23 (MRKYTVIASILLSFLSVLSGGHH) form the signal peptide. One can recognise an LTD domain in the interval 141-277 (EGYQADLAHI…VVISTNTGKD (137 aa)).

This is an uncharacterized protein from Bacillus subtilis (strain 168).